The primary structure comprises 2570 residues: Highly reducing polyketide synthase tstA (2570 aa).

The 428-residue stretch at 16 to 443 (AMPIAVVGIG…GANAHVVLEN (428 aa)) folds into the Ketosynthase family 3 (KS3) domain. Catalysis depends on for beta-ketoacyl synthase activity residues Cys-191, His-326, and His-366. The disordered stretch occupies residues 458-478 (HTRKSATESSGTSTPSNPGPH). Residues 464 to 478 (TESSGTSTPSNPGPH) are compositionally biased toward low complexity. The Malonyl-CoA:ACP transacylase (MAT) domain occupies 567 to 898 (FVFTGQGAQW…YSALVRNKNA (332 aa)). Positions 965 to 1103 (TDLLGVLERN…GLVSVVAPQK (139 aa)) are N-terminal hotdog fold. Residues 965-1293 (TDLLGVLERN…CATLAREGAD (329 aa)) form the PKS/mFAS DH domain. The Proton acceptor; for dehydratase activity role is filled by His-997. Positions 1133 to 1293 (RRNINVPQFY…CATLAREGAD (161 aa)) are C-terminal hotdog fold. The active-site Proton donor; for dehydratase activity is the Asp-1198. The methyltransferase (CMeT) domain stretch occupies residues 1343-1645 (LERAAYYMLK…IATSINSNNY (303 aa)). One can recognise an Enoyl reductase (ER) domain in the interval 1866–2178 (GLLDSIFWTD…TGGHMGKLVG (313 aa)). The region spanning 2202 to 2379 (ASYVLIGGLG…ATTIDLGAIS (178 aa)) is the Ketoreductase (KR) domain. Residues 2482–2559 (DASELILGAL…HLATKIAQRS (78 aa)) form the Carrier domain. O-(pantetheine 4'-phosphoryl)serine is present on Ser-2519.

The cofactor is pantetheine 4'-phosphate.

It functions in the pathway secondary metabolite biosynthesis. Its function is as follows. Highly reducing polyketide synthase; part of the gene cluster that mediates the biosynthesis of the antihypercholesterolemic agents phomoidrides which are dimeric anhydrides. The pathway begins with the highly reducing polyketide synthase tstA that catalyzes the formation of a C12-fatty acyl-ACP, starting from one acetate and 5 malonate units. The hydrolase tstM is involved in the release of the C12-fatty acyl chain from tstA. The alkylcitrate synthase (ACS) tstJ and the alkylcitrate dehydratase (ACDH) tstI then give rise to decarboxylated monomeric anhydrides by coupling the C12-fatty acyl chain with oxalacetic acid. The cyclase tstC is responsible for the dimerization of the monomeric anhydrides which leads to the production of prephomoidride that contains the characteristic bicyclo[4.3.1]deca-1,6-diene system of phomoidrides. Iterative oxidation catalyzed by the alpha-ketoglutarate-dependent dioxygenase tstK produced then phomoidride A. Finally, the methyltransferase tstE converts phomoidride A to phomoidride B via an acetalization reaction. The phosphatidylethanolamine-binding protein tstB and tstN are not essential for dimerization and their functions have still to be determined. This is Highly reducing polyketide synthase tstA from Talaromyces stipitatus (strain ATCC 10500 / CBS 375.48 / QM 6759 / NRRL 1006) (Penicillium stipitatum).